We begin with the raw amino-acid sequence, 467 residues long: Methylenetetrahydrofolate--tRNA-(uracil-5-)-methyltransferase TrmFO (467 aa).

10 to 15 (GGGMAG) contributes to the FAD binding site.

The protein belongs to the MnmG family. TrmFO subfamily. FAD is required as a cofactor.

The protein localises to the cytoplasm. The catalysed reaction is uridine(54) in tRNA + (6R)-5,10-methylene-5,6,7,8-tetrahydrofolate + NADH + H(+) = 5-methyluridine(54) in tRNA + (6S)-5,6,7,8-tetrahydrofolate + NAD(+). The enzyme catalyses uridine(54) in tRNA + (6R)-5,10-methylene-5,6,7,8-tetrahydrofolate + NADPH + H(+) = 5-methyluridine(54) in tRNA + (6S)-5,6,7,8-tetrahydrofolate + NADP(+). Catalyzes the folate-dependent formation of 5-methyl-uridine at position 54 (M-5-U54) in all tRNAs. This chain is Methylenetetrahydrofolate--tRNA-(uracil-5-)-methyltransferase TrmFO, found in Hyphomonas neptunium (strain ATCC 15444).